The chain runs to 418 residues: Serine hydroxymethyltransferase 2 (418 aa).

Residues Leu-121 and 125-127 (GHL) each bind (6S)-5,6,7,8-tetrahydrofolate. Lys-230 carries the N6-(pyridoxal phosphate)lysine modification. 355 to 357 (SPF) contacts (6S)-5,6,7,8-tetrahydrofolate.

The protein belongs to the SHMT family. As to quaternary structure, homodimer. It depends on pyridoxal 5'-phosphate as a cofactor.

It localises to the cytoplasm. It carries out the reaction (6R)-5,10-methylene-5,6,7,8-tetrahydrofolate + glycine + H2O = (6S)-5,6,7,8-tetrahydrofolate + L-serine. Its pathway is one-carbon metabolism; tetrahydrofolate interconversion. The protein operates within amino-acid biosynthesis; glycine biosynthesis; glycine from L-serine: step 1/1. Functionally, catalyzes the reversible interconversion of serine and glycine with tetrahydrofolate (THF) serving as the one-carbon carrier. This reaction serves as the major source of one-carbon groups required for the biosynthesis of purines, thymidylate, methionine, and other important biomolecules. Also exhibits THF-independent aldolase activity toward beta-hydroxyamino acids, producing glycine and aldehydes, via a retro-aldol mechanism. In Pseudomonas aeruginosa (strain ATCC 15692 / DSM 22644 / CIP 104116 / JCM 14847 / LMG 12228 / 1C / PRS 101 / PAO1), this protein is Serine hydroxymethyltransferase 2.